Reading from the N-terminus, the 343-residue chain is Zinc finger CCCH domain-containing protein 1 (343 aa).

Positions 1–102 (MSDSGEPKPS…PERSVFHYDS (102 aa)) are disordered. The span at 7 to 25 (PKPSQQEEPLPQPAAQETQ) shows a compositional bias: low complexity. The span at 35-44 (KPTKSKNIRK) shows a compositional bias: basic residues. The span at 79 to 91 (SSGPSKSSTTTSG) shows a compositional bias: low complexity. Residues 200–228 (DYQPDICKDYKETGYCGYGDSCKFLHDRG) form a C3H1-type zinc finger. A disordered region spans residues 249–268 (RNKAMGVEDEDDEADKDSDE). Positions 255-268 (VEDEDDEADKDSDE) are enriched in acidic residues. An RING-type zinc finger spans residues 277–315 (CFICREPFVDPVVTKCKHYFCEHCALKHHTKNKKCFVCN).

The polypeptide is Zinc finger CCCH domain-containing protein 1 (Arabidopsis thaliana (Mouse-ear cress)).